The chain runs to 260 residues: Dolichol-phosphate mannosyltransferase subunit 1 (260 aa).

Position 2 is an N-acetylalanine (A2). Phosphoserine occurs at positions 3 and 9. Residues P32, Y34, E36, I63, D65, D118, A119, D120, R147, R234, and K240 each coordinate GDP-alpha-D-mannose. Position 120 (D120) interacts with Mg(2+). D120 is a Mn(2+) binding site.

This sequence belongs to the glycosyltransferase 2 family. Component of the dolichol-phosphate mannose (DPM) synthase complex composed of DPM1, DPM2 and DPM3; within the complex, directly interacts with DPM3. This interaction stabilizes DPM1. Mg(2+) is required as a cofactor. Requires Mn(2+) as cofactor. It depends on Ca(2+) as a cofactor.

The protein localises to the endoplasmic reticulum. The catalysed reaction is a di-trans,poly-cis-dolichyl phosphate + GDP-alpha-D-mannose = a di-trans,poly-cis-dolichyl beta-D-mannosyl phosphate + GDP. It functions in the pathway protein modification; protein glycosylation. Transfers mannose from GDP-mannose to dolichol monophosphate to form dolichol phosphate mannose (Dol-P-Man) which is the mannosyl donor in pathways leading to N-glycosylation, glycosyl phosphatidylinositol membrane anchoring, and O-mannosylation of proteins; catalytic subunit of the dolichol-phosphate mannose (DPM) synthase complex. This chain is Dolichol-phosphate mannosyltransferase subunit 1 (DPM1), found in Homo sapiens (Human).